We begin with the raw amino-acid sequence, 498 residues long: Glycerol kinase (498 aa).

Position 12 (T12) interacts with ADP. Residues T12, T13, and S14 each contribute to the ATP site. Sn-glycerol 3-phosphate is bound at residue T12. R16 provides a ligand contact to ADP. R82, E83, and Y134 together coordinate sn-glycerol 3-phosphate. Glycerol is bound by residues R82, E83, and Y134. H230 is modified (phosphohistidine; by HPr). A sn-glycerol 3-phosphate-binding site is contributed by D244. Glycerol-binding residues include D244 and Q245. T266 and G309 together coordinate ADP. Residues T266, G309, Q313, and G410 each coordinate ATP. Positions 410 and 414 each coordinate ADP.

This sequence belongs to the FGGY kinase family. Homotetramer and homodimer (in equilibrium). The phosphoenolpyruvate-dependent sugar phosphotransferase system (PTS), including enzyme I, and histidine-containing protein (HPr) are required for the phosphorylation, which leads to the activation of the enzyme.

The enzyme catalyses glycerol + ATP = sn-glycerol 3-phosphate + ADP + H(+). It functions in the pathway polyol metabolism; glycerol degradation via glycerol kinase pathway; sn-glycerol 3-phosphate from glycerol: step 1/1. Its activity is regulated as follows. Activated by phosphorylation and inhibited by fructose 1,6-bisphosphate (FBP). In terms of biological role, key enzyme in the regulation of glycerol uptake and metabolism. Catalyzes the phosphorylation of glycerol to yield sn-glycerol 3-phosphate. This chain is Glycerol kinase, found in Staphylococcus aureus (strain MRSA252).